The primary structure comprises 180 residues: Large ribosomal subunit protein uL5 (180 aa).

The protein belongs to the universal ribosomal protein uL5 family. As to quaternary structure, forms a bridge to the 30S subunit in the 70S ribosome. Part of the 50S ribosomal subunit; part of the 5S rRNA/L5/L18/L25 (CTC) subcomplex. Is known to contact the 5S rRNA, 23S rRNA and the P site tRNA.

This is one of the proteins that bind and probably mediate the attachment of the 5S RNA into the large ribosomal subunit, where it forms part of the central protuberance. In the 70S ribosome it contacts protein S13 of the 30S subunit (bridge B1b), connecting the 2 subunits; this bridge is implicated in subunit movement. Contacts the P site tRNA; the 5S rRNA and some of its associated proteins might help stabilize positioning of ribosome-bound tRNAs. In Deinococcus radiodurans (strain ATCC 13939 / DSM 20539 / JCM 16871 / CCUG 27074 / LMG 4051 / NBRC 15346 / NCIMB 9279 / VKM B-1422 / R1), this protein is Large ribosomal subunit protein uL5 (rplE).